The primary structure comprises 159 residues: MKIVQETISTKTKKNIAIIISRYNNFINQHLLDGALDILKRIGQINQKNIPIIHVPGAYEIPIIASIISKQKKYNAIIALGTIIKGHTLHYSHISHAVNSGLTNISITNNIPISIGIITANNIEQAIERAGTKLGNKGSEAALTALEMINIINILAQNK.

5-amino-6-(D-ribitylamino)uracil contacts are provided by residues Tyr-23, 58 to 60 (AYE), and 82 to 84 (TII). His-90 (proton donor) is an active-site residue. Ile-115 contacts 5-amino-6-(D-ribitylamino)uracil. (2S)-2-hydroxy-3-oxobutyl phosphate is bound at residue Arg-129.

This sequence belongs to the DMRL synthase family. In terms of assembly, forms an icosahedral capsid composed of 60 subunits, arranged as a dodecamer of pentamers.

It catalyses the reaction (2S)-2-hydroxy-3-oxobutyl phosphate + 5-amino-6-(D-ribitylamino)uracil = 6,7-dimethyl-8-(1-D-ribityl)lumazine + phosphate + 2 H2O + H(+). It functions in the pathway cofactor biosynthesis; riboflavin biosynthesis; riboflavin from 2-hydroxy-3-oxobutyl phosphate and 5-amino-6-(D-ribitylamino)uracil: step 1/2. Functionally, catalyzes the formation of 6,7-dimethyl-8-ribityllumazine by condensation of 5-amino-6-(D-ribitylamino)uracil with 3,4-dihydroxy-2-butanone 4-phosphate. This is the penultimate step in the biosynthesis of riboflavin. This chain is 6,7-dimethyl-8-ribityllumazine synthase, found in Buchnera aphidicola subsp. Baizongia pistaciae (strain Bp).